The following is a 1394-amino-acid chain: Leucine-rich PPR motif-containing protein, mitochondrial (1394 aa).

A mitochondrion-targeting transit peptide spans 1-59 (MAALLRSARWLLRAGAAPRLPLSLRLLPGGPGRLHAASYLPAARAGPVAGGLLSPARLY). 8 PPR repeats span residues 126-160 (LLRSCGSLLPELKLEERTEFAHRIWDTLQKLGAVY), 161-195 (DVSHYNALLKVYLQNEYKFSPTDFLAKMEEANIQP), 196-230 (NRVTYQRLIASYCNVGDIEGASKILGFMKTKDLPV), 231-265 (TEAVFSALVTGHARAGDMENAENILTVMRDAGIEP), 266-300 (GPDTYLALLNAYAEKGDIDHVKQTLEKVEKSELHL), 301-335 (MDRDLLQIIFSFSKAGYPQYVSEILEKVTCERRYI), 403-437 (HSFPLQFTLHCALLANKTDLAKALMKAVKEEGFPI), and 438-472 (RPHYFWPLLVGRRKEKNVQGIIEILKGMQELGVHP). Residues lysine 155, lysine 187, and lysine 226 each carry the N6-acetyllysine modification. Position 292 is an N6-acetyllysine (lysine 292). N6-acetyllysine is present on residues lysine 463 and lysine 613. PPR repeat units follow at residues 678–709 (IRDVLKQLILVLCSEENMQKALELKAKYESDM), 710–746 (VTGGYAALINLCCRHDKVEDALNLKEEFDRLDSSAVL), 747–784 (DTGKYVGLVRVLAKHGKLQDAINILKEMKEKDVLIKDT), 785–820 (TALSFFHMLNGAALRGEIETVKQLHEAIVTLGLAEP), 821–856 (STNISFPLVTVHLEKGDLSTALEVAIDCYEKYKVLP), and 954–988 (RDQMYYNLLKLYKINGDWQRADAVWNKIQEENVIP). The tract at residues 712 to 1067 (GGYAALINLC…AKEQNIVFNA (356 aa)) is interaction with BECN1 and Aedes aegypti venom allergen-1. Residues lysine 726 and lysine 750 each carry the N6-acetyllysine modification. A phosphoserine mark is found at serine 1026, serine 1027, and serine 1029. 6 PPR repeats span residues 1031–1065 (TEPDFQKDILIACRLNQKKGAYDIFLNAKEQNIVF), 1066–1102 (NAETYSNLIKLLMSEDYFTQAMEVKAFAETHIKGFTL), 1103–1137 (NDAANSRLIITQVRRDYLKEAVTTLKTVLDQQQTP), 1138–1175 (SRLAVTRVIQALAMKGDVENIEVVQKMLNGLEDSIGLS), 1176–1210 (KMVFINNIALAQIKNNNIDAAIENIENMLTSENKV), and 1317–1351 (KEEAYNSLMKSYVSEKDVTSAKALYEHLTAKNTKL). Residues 1121–1394 (KEAVTTLKTV…QLRKLRENSS (274 aa)) are RNA-binding. Threonine 1136 is modified (phosphothreonine). Position 1138 is a phosphoserine (serine 1138).

As to quaternary structure, component of mRNP complexes associated with HNRPA1. Component of the complex, at least composed of LRPPRC, BECN1 and BCL2; the interactions prevent BECN1 from forming an autophagy-inducing complex with PIK3C3. Interacts with CECR2, HEBP2, MAP1S and UXT. Interacts with PPARGC1A. Interacts with FOXO1. Interacts (via N-terminus) with EIF4E; the interaction promotes association of EIF4E with 4ESE-containing mRNAs. Interacts with exportin XPO1/CRM1; interacts both alone and in complex with EIF4E and 4ESE-containing mRNAs to form an EIF4E-dependent mRNA export complex. Interacts with importin IPO8; the interaction occurs when LRPPRC is in its RNA-free form and returns LRPPRC to the nucleus for further export rounds. Interacts with BECN1. Interacts with Aedes aegypti venom allergen-1; the interaction interrupts BECN1 and LRPPRC association. As to expression, expressed ubiquitously. Expression is highest in heart, skeletal muscle, kidney and liver, intermediate in brain, non-mucosal colon, spleen and placenta, and lowest in small intestine, thymus, lung and peripheral blood leukocytes.

It localises to the mitochondrion. The protein resides in the nucleus. Its subcellular location is the nucleoplasm. It is found in the nucleus inner membrane. The protein localises to the nucleus outer membrane. In terms of biological role, may play a role in RNA metabolism in both nuclei and mitochondria. In the nucleus binds to HNRPA1-associated poly(A) mRNAs and is part of nmRNP complexes at late stages of mRNA maturation which are possibly associated with nuclear mRNA export. Positively modulates nuclear export of mRNAs containing the EIF4E sensitivity element (4ESE) by binding simultaneously to both EIF4E and the 4ESE and acting as a platform for assembly for the RNA export complex. Also binds to exportin XPO1/CRM1 to engage the nuclear pore and traffic the bound mRNAs to the cytoplasm. May bind mature mRNA in the nucleus outer membrane. In mitochondria binds to poly(A) mRNA. Plays a role in translation or stability of mitochondrially encoded cytochrome c oxidase (COX) subunits. May be involved in transcription regulation. Cooperates with PPARGC1A to regulate certain mitochondrially encoded genes and gluconeogenic genes and may regulate docking of PPARGC1A to transcription factors. Seems to be involved in the transcription regulation of the multidrug-related genes MDR1 and MVP. Part of a nuclear factor that binds to the invMED1 element of MDR1 and MVP gene promoters. Binds single-stranded DNA. Required for maintaining mitochondrial potential. Suppresses the initiation of basal levels of autophagy and mitophagy by sustaining BCL2 levels. The polypeptide is Leucine-rich PPR motif-containing protein, mitochondrial (LRPPRC) (Homo sapiens (Human)).